A 472-amino-acid chain; its full sequence is Aspartyl/glutamyl-tRNA(Asn/Gln) amidotransferase subunit B (472 aa).

The protein belongs to the GatB/GatE family. GatB subfamily. As to quaternary structure, heterotrimer of A, B and C subunits.

The enzyme catalyses L-glutamyl-tRNA(Gln) + L-glutamine + ATP + H2O = L-glutaminyl-tRNA(Gln) + L-glutamate + ADP + phosphate + H(+). It catalyses the reaction L-aspartyl-tRNA(Asn) + L-glutamine + ATP + H2O = L-asparaginyl-tRNA(Asn) + L-glutamate + ADP + phosphate + 2 H(+). Allows the formation of correctly charged Asn-tRNA(Asn) or Gln-tRNA(Gln) through the transamidation of misacylated Asp-tRNA(Asn) or Glu-tRNA(Gln) in organisms which lack either or both of asparaginyl-tRNA or glutaminyl-tRNA synthetases. The reaction takes place in the presence of glutamine and ATP through an activated phospho-Asp-tRNA(Asn) or phospho-Glu-tRNA(Gln). The protein is Aspartyl/glutamyl-tRNA(Asn/Gln) amidotransferase subunit B of Mycoplasmopsis agalactiae (strain NCTC 10123 / CIP 59.7 / PG2) (Mycoplasma agalactiae).